The sequence spans 62 residues: Photosystem II reaction center protein Z (62 aa).

Helical transmembrane passes span 8–28 (AVFALIATSSILLISVPVVFA) and 41–61 (FSGTSLWIGLVFLVGILNSLI).

It belongs to the PsbZ family. In terms of assembly, PSII is composed of 1 copy each of membrane proteins PsbA, PsbB, PsbC, PsbD, PsbE, PsbF, PsbH, PsbI, PsbJ, PsbK, PsbL, PsbM, PsbT, PsbY, PsbZ, Psb30/Ycf12, at least 3 peripheral proteins of the oxygen-evolving complex and a large number of cofactors. It forms dimeric complexes.

The protein localises to the plastid. Its subcellular location is the chloroplast thylakoid membrane. Its function is as follows. May control the interaction of photosystem II (PSII) cores with the light-harvesting antenna, regulates electron flow through the 2 photosystem reaction centers. PSII is a light-driven water plastoquinone oxidoreductase, using light energy to abstract electrons from H(2)O, generating a proton gradient subsequently used for ATP formation. This is Photosystem II reaction center protein Z from Vitis vinifera (Grape).